The following is a 212-amino-acid chain: MSDFAKVEQSLREEMTRIASSFFQRGYATGSAGNLSLLLPDGNLLATPTGSCLGNLDPQRLSKVTADGEWLSGDKPSKEVLFHLALYRNNPRCKAVVHLHSTWSTALSCLEGLDSNNVIRPFTPYVVMRMGNVPLVPYYRPGDKRIAQDLAELAADNQAFLLANHGPVVCGESLQEAANNMEELEETAKLIFILGDRPIRYLTAGEIAELRS.

E79 functions as the Proton acceptor in the catalytic mechanism. Zn(2+) contacts are provided by E79, H98, and H100. Catalysis depends on Y125, which acts as the Proton donor. H165 provides a ligand contact to Zn(2+).

Belongs to the aldolase class II family. AraD/FucA subfamily. Requires Zn(2+) as cofactor.

It carries out the reaction 3-dehydro-4-O-phospho-D-erythronate + H(+) = dihydroxyacetone phosphate + CO2. It catalyses the reaction 3-dehydro-4-O-phospho-L-erythronate + H(+) = dihydroxyacetone phosphate + CO2. Functionally, catalyzes the decarboxylation of 3-oxo-tetronate 4-phosphate to dihydroxyacetone phosphate (DHAP) and CO(2). In Escherichia coli O6:H1 (strain CFT073 / ATCC 700928 / UPEC), this protein is 3-oxo-tetronate 4-phosphate decarboxylase.